Reading from the N-terminus, the 263-residue chain is Chymotrypsinogen B (263 aa).

The signal sequence occupies residues 1–18; it reads MAFLWLVSCFALVGATFG. 5 cysteine pairs are disulfide-bonded: cysteine 19–cysteine 140, cysteine 60–cysteine 76, cysteine 154–cysteine 219, cysteine 186–cysteine 200, and cysteine 209–cysteine 238. The 228-residue stretch at 34-261 folds into the Peptidase S1 domain; sequence IVNGEDAIPG…LMPWVQEILE (228 aa). The active-site Charge relay system is the histidine 75. A Phosphoserine modification is found at serine 93. Catalysis depends on aspartate 120, which acts as the Charge relay system. Serine 213 (charge relay system) is an active-site residue.

This sequence belongs to the peptidase S1 family.

The protein localises to the secreted. It localises to the extracellular space. The catalysed reaction is Preferential cleavage: Tyr-|-Xaa, Trp-|-Xaa, Phe-|-Xaa, Leu-|-Xaa.. In Mus musculus (Mouse), this protein is Chymotrypsinogen B (Ctrb1).